Consider the following 249-residue polypeptide: Sesquipedalian-1 (249 aa).

The PH domain occupies Pro17 to Phe113. 2 disordered regions span residues Gly134–Val159 and Glu194–Leu219. Residues Gln140–Leu152 show a composition bias toward pro residues. At Ser213 the chain carries Phosphoserine. Positions Pro223–Ile235 match the F&amp;H motif.

Belongs to the sesquipedalian family. Forms homodimers and heterodimers with PHETA2. Interacts with OCRL and INPP5B. Interaction with OCRL may be important for endosomal morphology and function.

The protein resides in the early endosome. It localises to the recycling endosome. The protein localises to the golgi apparatus. Its subcellular location is the trans-Golgi network. It is found in the cytoplasmic vesicle. The protein resides in the clathrin-coated vesicle. Its function is as follows. Plays a role in endocytic trafficking. Required for receptor recycling from endosomes, both to the trans-Golgi network and the plasma membrane. This is Sesquipedalian-1 from Homo sapiens (Human).